Reading from the N-terminus, the 130-residue chain is Small ribosomal subunit protein uS11c (130 aa).

Belongs to the universal ribosomal protein uS11 family. As to quaternary structure, part of the 30S ribosomal subunit.

Its subcellular location is the plastid. The protein resides in the cyanelle. The sequence is that of Small ribosomal subunit protein uS11c from Cyanophora paradoxa.